The chain runs to 218 residues: Probable GTP-binding protein EngB (218 aa).

The EngB-type G domain maps to 31-205; it reads SGIEIAFAGR…EQKVTSWYAQ (175 aa). GTP is bound by residues 39–46, 66–70, 84–87, 151–154, and 184–186; these read GRSNAGKS, GRTQL, DLPG, TKAD, and FSS. Positions 46 and 68 each coordinate Mg(2+).

The protein belongs to the TRAFAC class TrmE-Era-EngA-EngB-Septin-like GTPase superfamily. EngB GTPase family. Mg(2+) serves as cofactor.

Functionally, necessary for normal cell division and for the maintenance of normal septation. This chain is Probable GTP-binding protein EngB, found in Psychromonas ingrahamii (strain DSM 17664 / CCUG 51855 / 37).